Reading from the N-terminus, the 417-residue chain is UDP-N-acetylglucosamine 1-carboxyvinyltransferase (417 aa).

Residue 22 to 23 (KN) participates in phosphoenolpyruvate binding. R91 contacts UDP-N-acetyl-alpha-D-glucosamine. C115 (proton donor) is an active-site residue. Residue C115 is modified to 2-(S-cysteinyl)pyruvic acid O-phosphothioketal. Residues 120 to 124 (RPVDL), D304, and I326 each bind UDP-N-acetyl-alpha-D-glucosamine.

It belongs to the EPSP synthase family. MurA subfamily.

The protein localises to the cytoplasm. It catalyses the reaction phosphoenolpyruvate + UDP-N-acetyl-alpha-D-glucosamine = UDP-N-acetyl-3-O-(1-carboxyvinyl)-alpha-D-glucosamine + phosphate. Its pathway is cell wall biogenesis; peptidoglycan biosynthesis. Functionally, cell wall formation. Adds enolpyruvyl to UDP-N-acetylglucosamine. This Nitratidesulfovibrio vulgaris (strain DP4) (Desulfovibrio vulgaris) protein is UDP-N-acetylglucosamine 1-carboxyvinyltransferase.